A 66-amino-acid polypeptide reads, in one-letter code: Large ribosomal subunit protein bL35 (66 aa).

Positions 1–16 (MPKMKTHRGAAKRVKR) are enriched in basic residues. Residues 1-28 (MPKMKTHRGAAKRVKRTGSGQLKRSRAF) are disordered.

This sequence belongs to the bacterial ribosomal protein bL35 family.

This is Large ribosomal subunit protein bL35 from Staphylococcus epidermidis (strain ATCC 35984 / DSM 28319 / BCRC 17069 / CCUG 31568 / BM 3577 / RP62A).